A 43-amino-acid polypeptide reads, in one-letter code: Photosystem I reaction center subunit IX (43 aa).

A helical transmembrane segment spans residues 7–27 (YLSTAPVLATFWFGLLAGLLI).

It belongs to the PsaJ family.

It localises to the plastid. The protein resides in the chloroplast thylakoid membrane. Functionally, may help in the organization of the PsaE and PsaF subunits. The polypeptide is Photosystem I reaction center subunit IX (Gnetum parvifolium (Small-leaved jointfir)).